Consider the following 1315-residue polypeptide: Myopalladin (1315 aa).

Disordered regions lie at residues 19-60 (SYLA…DLPD), 81-145 (INHD…TQSK), 166-204 (HSSK…TERR), and 230-266 (EAKR…LGQP). Composition is skewed to basic and acidic residues over residues 23 to 35 (ETRH…RSRA) and 84 to 104 (DPLE…DQTK). Phosphoserine is present on residues S99 and S129. The segment covering 166 to 180 (HSSKRIRPRACKNHK) has biased composition (basic residues). Positions 184–199 (ESQNKVLQENSPTFSD) are enriched in polar residues. A coiled-coil region spans residues 219–240 (DNELNHAIEQREAKRREAELAA). A Phosphothreonine modification is found at T249. The 91-residue stretch at 267-357 (PRFTQKLRSR…DSTSAEIYIE (91 aa)) folds into the Ig-like 1 domain. The cysteines at positions 288 and 339 are disulfide-linked. The disordered stretch occupies residues 359–392 (VSSSDSEGDPNKEEMNRIQKPNEVSSPPTTSAAI). The Ig-like 2 domain maps to 432 to 528 (PVFTKMLQNL…GTVSSIAQLD (97 aa)). A disulfide bridge connects residues C453 and C512. 3 disordered regions span residues 535–652 (ISDN…VLAK), 674–704 (LQNT…SSKQ), and 725–747 (SSTS…NTPQ). Residues 609–623 (SSGSGAANTSQTRPN) show a composition bias toward polar residues. S641 bears the Phosphoserine mark. Residues 725–741 (SSTSTATVSPSSSPVFT) show a composition bias toward low complexity. Position 754 is a phosphoserine (S754). Disordered stretches follow at residues 762–814 (HPST…TPVS) and 840–865 (NAMG…KAPQ). Residues 779 to 790 (PAPPSPAEPAAP) are compositionally biased toward pro residues. Phosphoserine occurs at positions 809 and 814. 2 positions are modified to phosphoserine: S903 and S924. Ig-like domains are found at residues 941 to 1025 (PIFD…GRIS), 1068 to 1157 (PHFL…LELT), and 1167 to 1257 (PVIL…ARLD). C1089 and C1141 are joined by a disulfide.

The protein belongs to the myotilin/palladin family. Interacts with TTN/titin, NEB, NEBL, ACTN2 and CARP.

It localises to the cytoplasm. The protein resides in the nucleus. Its subcellular location is the myofibril. It is found in the sarcomere. The protein localises to the z line. In terms of biological role, component of the sarcomere that tethers together nebulin (skeletal muscle) and nebulette (cardiac muscle) to alpha-actinin, at the Z lines. The sequence is that of Myopalladin (Mypn) from Mus musculus (Mouse).